The chain runs to 279 residues: Pantothenate synthetase (279 aa).

26 to 33 lines the ATP pocket; the sequence is MGNLHEGH. The Proton donor role is filled by histidine 33. Position 57 (glutamine 57) interacts with (R)-pantoate. Residue glutamine 57 participates in beta-alanine binding. 144–147 contributes to the ATP binding site; it reads GKKD. Glutamine 150 lines the (R)-pantoate pocket. Residues valine 173 and 181-184 each bind ATP; that span reads LSSR.

This sequence belongs to the pantothenate synthetase family. Homodimer.

It localises to the cytoplasm. The catalysed reaction is (R)-pantoate + beta-alanine + ATP = (R)-pantothenate + AMP + diphosphate + H(+). It functions in the pathway cofactor biosynthesis; (R)-pantothenate biosynthesis; (R)-pantothenate from (R)-pantoate and beta-alanine: step 1/1. In terms of biological role, catalyzes the condensation of pantoate with beta-alanine in an ATP-dependent reaction via a pantoyl-adenylate intermediate. This Burkholderia lata (strain ATCC 17760 / DSM 23089 / LMG 22485 / NCIMB 9086 / R18194 / 383) protein is Pantothenate synthetase.